We begin with the raw amino-acid sequence, 501 residues long: Acetyl-coenzyme A carboxylase carboxyl transferase subunit beta, chloroplastic (501 aa).

A CoA carboxyltransferase N-terminal domain is found at 231–501 (LWIECENCYG…LIQNEKESRS (271 aa)). Positions 235, 238, 254, and 257 each coordinate Zn(2+). The C4-type zinc-finger motif lies at 235-257 (CENCYGLNYKKILKSKMNICEHC).

The protein belongs to the AccD/PCCB family. In terms of assembly, acetyl-CoA carboxylase is a heterohexamer composed of biotin carboxyl carrier protein, biotin carboxylase and 2 subunits each of ACCase subunit alpha and ACCase plastid-coded subunit beta (accD). Zn(2+) is required as a cofactor.

It localises to the plastid. The protein resides in the chloroplast stroma. It catalyses the reaction N(6)-carboxybiotinyl-L-lysyl-[protein] + acetyl-CoA = N(6)-biotinyl-L-lysyl-[protein] + malonyl-CoA. The protein operates within lipid metabolism; malonyl-CoA biosynthesis; malonyl-CoA from acetyl-CoA: step 1/1. Its function is as follows. Component of the acetyl coenzyme A carboxylase (ACC) complex. Biotin carboxylase (BC) catalyzes the carboxylation of biotin on its carrier protein (BCCP) and then the CO(2) group is transferred by the transcarboxylase to acetyl-CoA to form malonyl-CoA. The chain is Acetyl-coenzyme A carboxylase carboxyl transferase subunit beta, chloroplastic from Lotus japonicus (Lotus corniculatus var. japonicus).